Reading from the N-terminus, the 278-residue chain is HTH-type transcriptional activator RhaS (278 aa).

The HTH araC/xylS-type domain maps to 174–272; the sequence is NLLLAWLEDH…NWSPRDIRQG (99 aa). 2 consecutive DNA-binding regions (H-T-H motif) follow at residues 191–212 and 239–262; these read DAVA…KQQT and VTDI…RREF.

Binds DNA as a dimer.

It is found in the cytoplasm. Functionally, activates expression of the rhaBAD and rhaT operons. In Shigella flexneri serotype 5b (strain 8401), this protein is HTH-type transcriptional activator RhaS.